Reading from the N-terminus, the 913-residue chain is MFAPLLKKLFGSKNEREVKRMLKTVQIVNAFEEQMVALSDDQLRAKTAEFKARIAKGETLDKLLPEAFAVAREAGKRIMGMRHFDVQLIGGMTLHEGKIAEMRTGEGKTLVATLGVYLNALSGKGVHVVTVNDYLARRDANWMRPLYEFLGLSVGVVTPFQPPEEKRAAYAADITYGTNNEFGFDYLRDNMAFSMEDKFQRELNFAVIDEVDSILIDEARTPLIISGQAEDSSRLYTEINKLIPRLEQHIEEVEGQVTKAGHFTVDEKTRQVELNEAGHQFIEEMLTQVGLLAEGESLYSAHNLGLLTHVYAGLRAHKLFNRNVEYIVQDGQVVLVDEHTGRTMPGRRLSEGLHQAIEAKENLNIQAESQTLASTTFQNYFRLYTKLSGMTGTADTEAFEFHQIYGLQVMVIPPNKPLARKDYNDLVFLTADEKYAAIINDIKECMTQGRPVLVGTATIETSEHMSNLLNKEGIEHKVLNAKFHEKEAEIIAQAGRPGALTIATNMAGRGTDILLGGNWEVEVASLENPTPEQIAQIKADWQKRHQQVLESGGLQVIASERHESRRIDNQLRGRAGRQGDAGSSRFYLSLEDSLMRIFASDRVKNFMKALGMQSGEAIEHRMVTNAIEKAQRKVEGRNFDIRKQLLEFDDVNNEQRKVIYHMRNTLLAADNIGETIADFRQDVLNATVSAHIPPQSLPEQWDVAGLEEAIQSGFGVSLPIQQWLDEDDHLYEETLREKLLNELIAAYNEKEDQAGAEALRTFEKQIVLRVLDDLWKDHLSTMDHLRHGIHLRGYAQKNPKQEYKRESFTLFSELLDSIKRDSIRVLSHVQVRREDPAEEEARLRQEAEALAQRMQFEHAEAPGLDQPEALEEGVEVDVALATAPVRNEQKLGRNELCYCGSGKKYKHCHGQIN.

Residues Gln-87, 105 to 109 (GEGKT), and Asp-512 contribute to the ATP site. 4 residues coordinate Zn(2+): Cys-897, Cys-899, Cys-908, and His-909.

The protein belongs to the SecA family. As to quaternary structure, monomer and homodimer. Part of the essential Sec protein translocation apparatus which comprises SecA, SecYEG and auxiliary proteins SecDF-YajC and YidC. Zn(2+) serves as cofactor.

It is found in the cell inner membrane. It localises to the cytoplasm. The catalysed reaction is ATP + H2O + cellular proteinSide 1 = ADP + phosphate + cellular proteinSide 2.. Its function is as follows. Part of the Sec protein translocase complex. Interacts with the SecYEG preprotein conducting channel. Has a central role in coupling the hydrolysis of ATP to the transfer of proteins into and across the cell membrane, serving both as a receptor for the preprotein-SecB complex and as an ATP-driven molecular motor driving the stepwise translocation of polypeptide chains across the membrane. This Pseudomonas fluorescens (strain ATCC BAA-477 / NRRL B-23932 / Pf-5) protein is Protein translocase subunit SecA.